The primary structure comprises 648 residues: ATPase family AAA domain-containing protein 3B (648 aa).

2 disordered regions span residues 1 to 54 and 111 to 134; these read MSWL…DPTG and QAEE…QYQD. N-acetylserine is present on Ser-2. Residues 2 to 246 are Mitochondrial intermembrane-facing; sequence SWLFGVNKGP…FRAFVTDRDK (245 aa). Positions 17-26 are enriched in pro residues; sequence GPPPPLPPAQ. Composition is skewed to basic and acidic residues over residues 32-48 and 111-125; these read GGDR…DKWS and QAEE…ETRQ. Residues 69–214 are a coiled coil; the sequence is RYAKEALNLA…DIIREQIRLK (146 aa). Residues 247–264 constitute an intramembrane region (helical); sequence VTATVAGLTLLAVGVYSA. At 265–648 the chain is on the mitochondrial intermembrane side; sequence KNATAVTGRF…PFCPPGHPLL (384 aa). 352-359 contributes to the ATP binding site; it reads GPPGTGKT. N6-acetyllysine is present on residues Lys-427 and Lys-495.

This sequence belongs to the AAA ATPase family. Forms heterooligomers with ATAD3A. Interacts with components of the mitochondrial ribosome, including MRPL11 and MRPS18B, and with other proteins involved in mitochondrial RNA metabolism, possibly via interaction with ATAD3A. Interacts with GADD45GIP1. As to expression, tends to be down-regulated in differentiated cells and re-expressed in pluripotent stem cells or cancer cells (at protein level).

The protein resides in the mitochondrion inner membrane. Its function is as follows. May play a role in a mitochondrial network organization typical for stem cells, characterized by reduced mitochondrial metabolism, low mtDNA copies and fragmentated mitochondrial network. May act by suppressing ATAD3A function, interfering with ATAD3A interaction with matrix nucleoid complexes. This is ATPase family AAA domain-containing protein 3B (ATAD3B) from Homo sapiens (Human).